Reading from the N-terminus, the 179-residue chain is Large ribosomal subunit protein uL6 (179 aa).

Belongs to the universal ribosomal protein uL6 family. Part of the 50S ribosomal subunit.

In terms of biological role, this protein binds to the 23S rRNA, and is important in its secondary structure. It is located near the subunit interface in the base of the L7/L12 stalk, and near the tRNA binding site of the peptidyltransferase center. This Mycobacterium avium (strain 104) protein is Large ribosomal subunit protein uL6.